The chain runs to 390 residues: Immunoglobulin mu Fc receptor (390 aa).

The signal sequence occupies residues 1-16 (MDFWLWPLYFLPVSGA). Topologically, residues 17–251 (LRILPEVKVE…GSQSGREGQG (235 aa)) are extracellular. Residues 23–123 (VKVEGELGGS…KTQKVTLNVH (101 aa)) enclose the Ig-like domain. Positions 33–115 (VTIKCPLPEM…AGMNTDRGKT (83 aa)) are CDR4. Intrachain disulfides connect C37/C104 and C49/C58. Positions 40 to 45 (PEMHVR) are CDR1. The segment at 59-70 (GTVVSTTNFIKA) is CDR2. T92 bears the Phosphothreonine mark. The CDR3 stretch occupies residues 106–115 (AGMNTDRGKT). The tract at residues 166 to 204 (PAQRGKVPPVHHSSPTTQITHRPRVSRASSVAGDKPRTF) is disordered. The chain crosses the membrane as a helical span at residues 252 to 272 (FHILIPTILGLFLLALLGLVV). Residues 273–390 (KRAVERRKAL…DSDDYINVPA (118 aa)) are Cytoplasmic-facing. Low complexity-rich tracts occupy residues 293–311 (MRAL…PRSQ) and 325–334 (ADAAGTGEAP). Residues 293 to 348 (MRALESSQRPRGSPRPRSQNNIYSACPRRARGADAAGTGEAPVPGPGAPLPPAPLQ) form a disordered region. The segment covering 335–346 (VPGPGAPLPPAP) has biased composition (pro residues).

As to quaternary structure, interacts (via Ig-like domain) with IGHM (via CH4/Cmu4 domain), both secreted and membrane-bound IgM; the interaction is glycan-independent and multivalent theoretically involving up to eight binding sites for the IgM pentamer. Phosphorylated on both Tyr and Ser residues. Post-translationally, O-glycosylated. Sialylated. O-linked glycans regulate trafficking to the plasma membrane. In terms of tissue distribution, expressed by CD19-positive B cells and CD4-positive and CD8-positive T cell populations in primary and secondary lymphoid tissues (at protein level). Among B cell subsets, detected in a subset of bone marrow pro- and pre-B cells, in most follicular and memory B cells and in a small subset of germinal center B cells (at protein level). Expressed at lower levels in CD56-positive NK cells (at protein level). Expressed in lymph nodes, lung, thymus and kidneys. Very weak expression detected in spleen, liver, heart, and salivary gland.

The protein localises to the cell membrane. It localises to the early endosome membrane. The protein resides in the golgi apparatus. Its subcellular location is the trans-Golgi network membrane. It is found in the lysosome membrane. The protein localises to the secreted. High-affinity Fc receptor for immunoglobulin M (IgM), both secreted and membrane-bound IgM. Primarily regulates IgM transport and homeostasis. In lymphoid cells, enables exocytosis of membrane-bound IgM on the plasma membrane as well as endocytosis of IgM-antigen complexes toward lysosomes for degradation. In mucosal epithelium, mediates retrotranscytosis of antigen-IgM complexes across mucosal M cells toward antigen-presenting cells in mucosal lymphoid tissues. Triggers costimulatory signaling and mediates most of IgM effector functions involved in B cell development and primary immune response to infection. Likely limits tonic IgM BCR signaling to self-antigens for proper negative selection of autoreactive B cells in the bone marrow and for the maintenance of regulatory B cell pool in peripheral lymphoid organs. Mediates antibody responses to T cell-dependent and T cell-independent antigens and promotes induction of an efficient neutralizing IgG response. Engages in cross-talk with antigen-receptor signaling via the non-canonical NF-kappa-B, MAP kinases and calcium signaling pathways. The chain is Immunoglobulin mu Fc receptor from Homo sapiens (Human).